A 60-amino-acid polypeptide reads, in one-letter code: MAQLKITQVKSYIGSKQNHRDTLRSLGLKGINTQVVKEDRPEFRGMVHTVRHLVTVEEVD.

It belongs to the universal ribosomal protein uL30 family. As to quaternary structure, part of the 50S ribosomal subunit.

This chain is Large ribosomal subunit protein uL30, found in Streptomyces coelicolor (strain ATCC BAA-471 / A3(2) / M145).